Consider the following 287-residue polypeptide: uncharacterized protein (287 aa).

Residues 43–50 (GKTGAGKS), 90–93 (DLPG), and 156–159 (DKAE) contribute to the GTP site. The G domain maps to 48-140 (GKSSLCNALF…TDEHFYRQVI (93 aa)).

The protein to E.coli YkfA and YeeP.

This is an uncharacterized protein from Escherichia coli (strain K12).